A 391-amino-acid chain; its full sequence is 1-deoxy-D-xylulose 5-phosphate reductoisomerase (391 aa).

Residues Thr-17, Gly-18, Ser-19, Ile-20, Asn-47, and Asn-130 each coordinate NADPH. Lys-131 serves as a coordination point for 1-deoxy-D-xylulose 5-phosphate. Glu-132 is a binding site for NADPH. Asp-156 provides a ligand contact to Mn(2+). Ser-157, Glu-158, Ser-182, and His-205 together coordinate 1-deoxy-D-xylulose 5-phosphate. Residue Glu-158 participates in Mn(2+) binding. Residue Gly-211 coordinates NADPH. 1-deoxy-D-xylulose 5-phosphate is bound by residues Ser-218, Asn-223, Lys-224, and Glu-227. Residue Glu-227 coordinates Mn(2+).

Belongs to the DXR family. Requires Mg(2+) as cofactor. Mn(2+) is required as a cofactor.

It catalyses the reaction 2-C-methyl-D-erythritol 4-phosphate + NADP(+) = 1-deoxy-D-xylulose 5-phosphate + NADPH + H(+). The protein operates within isoprenoid biosynthesis; isopentenyl diphosphate biosynthesis via DXP pathway; isopentenyl diphosphate from 1-deoxy-D-xylulose 5-phosphate: step 1/6. Its function is as follows. Catalyzes the NADPH-dependent rearrangement and reduction of 1-deoxy-D-xylulose-5-phosphate (DXP) to 2-C-methyl-D-erythritol 4-phosphate (MEP). This is 1-deoxy-D-xylulose 5-phosphate reductoisomerase from Rhizobium meliloti (strain 1021) (Ensifer meliloti).